Here is a 267-residue protein sequence, read N- to C-terminus: Type II pantothenate kinase (267 aa).

An ATP-binding site is contributed by 6–13 (DAGGTLIK). The Proton acceptor role is filled by Glu70. ATP contacts are provided by residues Thr99, 121–125 (GGMIQ), Tyr137, and Ser225.

It belongs to the type II pantothenate kinase family. In terms of assembly, homodimer.

It localises to the cytoplasm. It carries out the reaction (R)-pantothenate + ATP = (R)-4'-phosphopantothenate + ADP + H(+). The protein operates within cofactor biosynthesis; coenzyme A biosynthesis; CoA from (R)-pantothenate: step 1/5. Catalyzes the phosphorylation of pantothenate (Pan), the first step in CoA biosynthesis. This is Type II pantothenate kinase from Staphylococcus aureus (strain USA300).